Reading from the N-terminus, the 97-residue chain is Defensin-like protein 301 (97 aa).

A signal peptide spans 1 to 24 (MEKVTSIFFVLLLISSCLILRSQG). Intrachain disulfides connect Cys-28–Cys-47, Cys-34–Cys-53, Cys-39–Cys-55, Cys-65–Cys-84, Cys-71–Cys-92, and Cys-76–Cys-94.

The protein belongs to the DEFL family.

The protein resides in the secreted. The polypeptide is Defensin-like protein 301 (Arabidopsis thaliana (Mouse-ear cress)).